Reading from the N-terminus, the 492-residue chain is Probable malate:quinone oxidoreductase (492 aa).

It belongs to the MQO family. Requires FAD as cofactor.

The catalysed reaction is (S)-malate + a quinone = a quinol + oxaloacetate. The protein operates within carbohydrate metabolism; tricarboxylic acid cycle; oxaloacetate from (S)-malate (quinone route): step 1/1. The polypeptide is Probable malate:quinone oxidoreductase (Methylobacillus flagellatus (strain ATCC 51484 / DSM 6875 / VKM B-1610 / KT)).